The following is a 498-amino-acid chain: DNA primase (498 aa).

The CHC2-type zinc finger occupies 35-59; sequence CPFHPDDTPSFYVSPSKQIFKCFGC. Positions 243 to 324 constitute a Toprim domain; that stretch reads GFAILVEGYF…EVYPVYLPEG (82 aa). 3 residues coordinate Mg(2+): E249, D293, and D295.

This sequence belongs to the DnaG primase family. In terms of assembly, monomer. Interacts with DnaB. The cofactor is Zn(2+). Mg(2+) is required as a cofactor.

It carries out the reaction ssDNA + n NTP = ssDNA/pppN(pN)n-1 hybrid + (n-1) diphosphate.. In terms of biological role, RNA polymerase that catalyzes the synthesis of short RNA molecules used as primers for DNA polymerase during DNA replication. This chain is DNA primase, found in Aquifex aeolicus (strain VF5).